The chain runs to 1199 residues: DNA-directed RNA polymerase subunit beta' (1199 aa).

Positions 60, 62, 75, and 78 each coordinate Zn(2+). Aspartate 449, aspartate 451, and aspartate 453 together coordinate Mg(2+). The Zn(2+) site is built by cysteine 818, cysteine 892, cysteine 899, and cysteine 902.

The protein belongs to the RNA polymerase beta' chain family. The RNAP catalytic core consists of 2 alpha, 1 beta, 1 beta' and 1 omega subunit. When a sigma factor is associated with the core the holoenzyme is formed, which can initiate transcription. It depends on Mg(2+) as a cofactor. Zn(2+) serves as cofactor.

The catalysed reaction is RNA(n) + a ribonucleoside 5'-triphosphate = RNA(n+1) + diphosphate. DNA-dependent RNA polymerase catalyzes the transcription of DNA into RNA using the four ribonucleoside triphosphates as substrates. The polypeptide is DNA-directed RNA polymerase subunit beta' (Bacillus pumilus (strain SAFR-032)).